A 447-amino-acid chain; its full sequence is Clusterin (447 aa).

A signal peptide spans 1–22; that stretch reads MKTLLLCVGLLLSWERGQVLGD. Positions 77-80 match the Nuclear localization signal motif; that stretch reads KKNK. Asparagine 85 and asparagine 102 each carry an N-linked (GlcNAc...) asparagine glycan. Intrachain disulfides connect cysteine 101-cysteine 311, cysteine 112-cysteine 303, cysteine 115-cysteine 300, cysteine 120-cysteine 293, and cysteine 128-cysteine 283. The residue at position 132 (serine 132) is a Phosphoserine. Asparagine 144, asparagine 289, asparagine 326, asparagine 352, and asparagine 372 each carry an N-linked (GlcNAc...) asparagine glycan. Serine 394 carries the phosphoserine modification. The short motif at 441–445 is the Nuclear localization signal element; the sequence is RKKKR.

It belongs to the clusterin family. As to quaternary structure, antiparallel disulfide-linked heterodimer of an alpha chain and a beta chain. Self-associates and forms higher oligomers. Interacts with a broad range of misfolded proteins, including APP, APOC2 and LYZ. Slightly acidic pH promotes interaction with misfolded proteins. Forms high-molecular weight oligomers upon interaction with misfolded proteins. Interacts with APOA1, LRP2, CLUAP1 and PON1. Interacts with the complement membrane attack complex. Interacts (via alpha chain) with XRCC6. Interacts with SYVN1, COMMD1, BTRC, CUL1 and with ubiquitin and SCF (SKP1-CUL1-F-box protein) E3 ubiquitin-protein ligase complexes. Interacts (via alpha chain) with BAX in stressed cells, where BAX undergoes a conformation change leading to association with the mitochondrial membrane. Does not interact with BAX in unstressed cells. Found in a complex with LTF, CLU, EPPIN and SEMG1. Interacts (immaturely glycosylated pre-secreted form) with HSPA5; this interaction promotes CLU stability and facilitates stress-induced CLU retrotranslocation from the secretory pathway to the mitochondria, thereby reducing stress-induced apoptosis by stabilizing mitochondrial membrane integrity. Interacts with BCL2L1; this interaction releases and activates BAX and promotes cell death. Interacts with TGFBR2 and ACVR1. Interacts (secreted form) with STMN3; this interaction may act as an important modulator during neuronal differentiation. Interacts with VLDLR and LRP8. Post-translationally, proteolytically cleaved on its way through the secretory system, probably within the Golgi lumen. Proteolytic cleavage is not necessary for its chaperone activity. All non-secreted forms are not proteolytically cleaved. Chaperone activity of uncleaved forms is dependent on a non-reducing environment. Polyubiquitinated, leading to proteasomal degradation. Under cellular stress, the intracellular level of cleaved form is reduced due to proteasomal degradation. In terms of processing, heavily N-glycosylated. About 30% of the protein mass is comprised of complex N-linked carbohydrate. Endoplasmic reticulum (ER) stress induces changes in glycosylation status and increases level of hypoglycosylated forms. Core carbohydrates are essential for chaperone activity. Non-secreted forms are hypoglycosylated or unglycosylated.

It is found in the secreted. It localises to the nucleus. The protein localises to the cytoplasm. Its subcellular location is the mitochondrion membrane. The protein resides in the cytosol. It is found in the microsome. It localises to the endoplasmic reticulum. The protein localises to the mitochondrion. Its subcellular location is the perinuclear region. The protein resides in the cytoplasmic vesicle. It is found in the secretory vesicle. It localises to the chromaffin granule. In terms of biological role, functions as extracellular chaperone that prevents aggregation of non native proteins. Prevents stress-induced aggregation of blood plasma proteins. Inhibits formation of amyloid fibrils by APP, APOC2, B2M, CALCA, CSN3, SNCA and aggregation-prone LYZ variants (in vitro). Does not require ATP. Maintains partially unfolded proteins in a state appropriate for subsequent refolding by other chaperones, such as HSPA8/HSC70. Does not refold proteins by itself. Binding to cell surface receptors triggers internalization of the chaperone-client complex and subsequent lysosomal or proteasomal degradation. When secreted, protects cells against apoptosis and against cytolysis by complement: inhibits assembly of the complement membrane attack complex (MAC) by preventing polymerization of C9 pore component of the MAC complex. Intracellular forms interact with ubiquitin and SCF (SKP1-CUL1-F-box protein) E3 ubiquitin-protein ligase complexes and promote the ubiquitination and subsequent proteasomal degradation of target proteins. Promotes proteasomal degradation of COMMD1 and IKBKB. Modulates NF-kappa-B transcriptional activity. Following stress, promotes apoptosis. Inhibits apoptosis when associated with the mitochondrial membrane by interference with BAX-dependent release of cytochrome c into the cytoplasm. Plays a role in the regulation of cell proliferation. An intracellular form suppresses stress-induced apoptosis by stabilizing mitochondrial membrane integrity through interaction with HSPA5. Secreted form does not affect caspase or BAX-mediated intrinsic apoptosis and TNF-induced NF-kappa-B-activity. Secreted form act as an important modulator during neuronal differentiation through interaction with STMN3. Plays a role in the clearance of immune complexes that arise during cell injury. The sequence is that of Clusterin (CLU) from Oryctolagus cuniculus (Rabbit).